The sequence spans 104 residues: Gastrin (104 aa).

A signal peptide spans 1 to 21 (MQRLCVYVLILALALATFSEA). A propeptide spanning residues 22-58 (SWKPRSRLQDAPSGPGANRGLEPHGLDQLGPASHHRR) is cleaved from the precursor. The disordered stretch occupies residues 22–70 (SWKPRSRLQDAPSGPGANRGLEPHGLDQLGPASHHRRQLGLQGPPQLVA). A pyrrolidone carboxylic acid mark is found at Gln-59 and Gln-76. Tyr-87 is modified (sulfotyrosine). Residue Phe-92 is modified to Phenylalanine amide. Residue Ser-96 is modified to Phosphoserine. The propeptide occupies 96–104 (SAEEGDQRP).

This sequence belongs to the gastrin/cholecystokinin family.

It is found in the secreted. Gastrin stimulates the stomach mucosa to produce and secrete hydrochloric acid and the pancreas to secrete its digestive enzymes. It also stimulates smooth muscle contraction and increases blood circulation and water secretion in the stomach and intestine. In Canis lupus familiaris (Dog), this protein is Gastrin (GAST).